The sequence spans 150 residues: Small ribosomal subunit protein eS19 (150 aa).

Belongs to the eukaryotic ribosomal protein eS19 family. In terms of assembly, part of the 30S ribosomal subunit.

Functionally, may be involved in maturation of the 30S ribosomal subunit. This is Small ribosomal subunit protein eS19 from Pyrococcus horikoshii (strain ATCC 700860 / DSM 12428 / JCM 9974 / NBRC 100139 / OT-3).